The chain runs to 352 residues: Inner membrane protein YeeA (352 aa).

Residues 1 to 25 are Cytoplasmic-facing; that stretch reads MRADKSLSPFEIRVYRHYRIVHGTR. 2 consecutive transmembrane segments (helical) span residues 26–46 and 47–67; these read VALA…PEST and WPLV…NVVP. Arg-68 is a topological domain (cytoplasmic). Residues 69-89 traverse the membrane as a helical segment; that stretch reads AFERIGGTVLGSILGLIALQL. Residue Glu-90 is a topological domain, periplasmic. Residues 91 to 111 traverse the membrane as a helical segment; it reads LISLPLMLVWCAAAMFLCGWL. Over 112–117 the chain is Cytoplasmic; that stretch reads ALGKKP. The helical transmembrane segment at 118–138 threads the bilayer; it reads YQGLLIGVTLAIVVGSPTGEI. Topologically, residues 139 to 147 are periplasmic; sequence DTALWRSGD. Residues 148 to 168 form a helical membrane-spanning segment; that stretch reads VILGSLLAMLFTGIWPQRAFI. The Cytoplasmic segment spans residues 169 to 352; that stretch reads HWRIQLAKSL…SNLICRALRK (184 aa).

Its subcellular location is the cell inner membrane. This Escherichia coli (strain K12) protein is Inner membrane protein YeeA (yeeA).